Consider the following 195-residue polypeptide: MDAPRRSSRLAAKIANVLDSKGTIIPEAAPVMLKKPAKDESVDSTIQVGDVIPDITLPDEDGTSIRLRDITANKGLVIFAYPKASTPGCTKQGCGFRDNYPKIQASDYEVLGLSFDTSKAQKAFKDKQNFPYHLLSDPKGELIKKLGAEKPGGGKLFRSHWIFEKGTGKCIVKEIDISPLVSVDKAFAVITDSEP.

Residues 46–168 (IQVGDVIPDI…SHWIFEKGTG (123 aa)) form the Thioredoxin domain. Cysteine 89 (cysteine sulfenic acid (-SOH) intermediate) is an active-site residue. An intrachain disulfide couples cysteine 89 to cysteine 94.

It belongs to the peroxiredoxin family. BCP/PrxQ subfamily. As to quaternary structure, monomer. In terms of processing, the active site is a conserved redox-active cysteine residue, the peroxidatic cysteine (C(P)), which makes the nucleophilic attack on the peroxide substrate. The peroxide oxidizes the C(P)-SH to cysteine sulfenic acid (C(P)-SOH), which then reacts with another cysteine residue, the resolving cysteine (C(R)), to form a disulfide bridge. The disulfide is subsequently reduced by an appropriate electron donor to complete the catalytic cycle. In this atypical 2-Cys peroxiredoxin, C(R) is present in the same subunit to form an intramolecular disulfide. The disulfide is subsequently reduced by thioredoxin.

It localises to the cytoplasm. Its subcellular location is the nucleus. It catalyses the reaction a hydroperoxide + [thioredoxin]-dithiol = an alcohol + [thioredoxin]-disulfide + H2O. Thiol-specific peroxidase that catalyzes the reduction of hydrogen peroxide and organic hydroperoxides to water and alcohols, respectively. Plays a role in cell protection against oxidative stress by detoxifying peroxides and as sensor of hydrogen peroxide-mediated signaling events. Acts as a scavenger of H(2)O(2). This Schizosaccharomyces pombe (strain 972 / ATCC 24843) (Fission yeast) protein is Peroxiredoxin bcp1 (bcp1).